A 428-amino-acid chain; its full sequence is MTPPCLNCSIFPGALSPNASRSPLVCNISEFKWPYQPEDLNLTDEALRLKYLGPQQMKQFVPICVTYLLIFVVGTLGNGLTCTVILRNKTMRTPTNFYLFSLAVSDMLVLLVGLPLELYEMQQNYPFQLGASACYFRILLLETVCLASVLNVTALSVERYVAVVRPLQAKSVMTRAHVRRMVGAIWVLATLFSLPNTSLHGLSQLTVPCRGPVPDSAICSLVGPMDFYKLVVLTTALLFFCLPMVTISVLYLLIGLRLRRERMLLQVEVKGRKTAATQETSHRRIQLQDRGRRQVTKMLFALVVVFGICWAPFHADRIMWSLVYGHSTEGLHLAYQCVHIASGIFFYLGSAANPVLYSLMSTRFRETFLQALGLGTQCCHRRQPYHGSHNHIRLTTGSTLCDVGHRNSRDEPLAVNEDPGCQQETDPS.

Over 1–59 (MTPPCLNCSIFPGALSPNASRSPLVCNISEFKWPYQPEDLNLTDEALRLKYLGPQQMKQ) the chain is Extracellular. 2 N-linked (GlcNAc...) asparagine glycosylation sites follow: asparagine 27 and asparagine 41. The chain crosses the membrane as a helical span at residues 60-80 (FVPICVTYLLIFVVGTLGNGL). At 81 to 96 (TCTVILRNKTMRTPTN) the chain is on the cytoplasmic side. Residues 97–117 (FYLFSLAVSDMLVLLVGLPLE) form a helical membrane-spanning segment. Topologically, residues 118 to 137 (LYEMQQNYPFQLGASACYFR) are extracellular. A disulfide bridge connects residues cysteine 134 and cysteine 219. A helical transmembrane segment spans residues 138-158 (ILLLETVCLASVLNVTALSVE). Residues 159–181 (RYVAVVRPLQAKSVMTRAHVRRM) lie on the Cytoplasmic side of the membrane. A helical transmembrane segment spans residues 182–202 (VGAIWVLATLFSLPNTSLHGL). Residues 203–235 (SQLTVPCRGPVPDSAICSLVGPMDFYKLVVLTT) are Extracellular-facing. Residues 236 to 256 (ALLFFCLPMVTISVLYLLIGL) traverse the membrane as a helical segment. Residues 257 to 294 (RLRRERMLLQVEVKGRKTAATQETSHRRIQLQDRGRRQ) lie on the Cytoplasmic side of the membrane. A helical transmembrane segment spans residues 295-315 (VTKMLFALVVVFGICWAPFHA). Topologically, residues 316–339 (DRIMWSLVYGHSTEGLHLAYQCVH) are extracellular. A helical membrane pass occupies residues 340–360 (IASGIFFYLGSAANPVLYSLM). At 361-428 (STRFRETFLQ…PGCQQETDPS (68 aa)) the chain is on the cytoplasmic side.

Belongs to the G-protein coupled receptor 1 family. In terms of tissue distribution, ubiquitously expressed.

It localises to the cell membrane. Functionally, receptor for the neuromedin-U and neuromedin-S neuropeptides. The sequence is that of Neuromedin-U receptor 1 (Nmur1) from Mus musculus (Mouse).